The sequence spans 115 residues: Large ribosomal subunit protein uL24 (115 aa).

This sequence belongs to the universal ribosomal protein uL24 family. As to quaternary structure, part of the 50S ribosomal subunit.

Its function is as follows. One of two assembly initiator proteins, it binds directly to the 5'-end of the 23S rRNA, where it nucleates assembly of the 50S subunit. One of the proteins that surrounds the polypeptide exit tunnel on the outside of the subunit. The protein is Large ribosomal subunit protein uL24 of Deinococcus deserti (strain DSM 17065 / CIP 109153 / LMG 22923 / VCD115).